Reading from the N-terminus, the 554-residue chain is Phosphomannomutase (554 aa).

The Phosphoserine intermediate role is filled by Ser149. Mg(2+) contacts are provided by Ser149, Asp301, Asp303, and Asp305.

This sequence belongs to the phosphohexose mutase family. It depends on Mg(2+) as a cofactor.

It catalyses the reaction alpha-D-mannose 1-phosphate = D-mannose 6-phosphate. The sequence is that of Phosphomannomutase (manB) from Mycoplasma pneumoniae (strain ATCC 29342 / M129 / Subtype 1) (Mycoplasmoides pneumoniae).